Reading from the N-terminus, the 55-residue chain is uncharacterized protein (55 aa).

This is an uncharacterized protein from Acidithiobacillus ferrooxidans (Thiobacillus ferrooxidans).